Here is a 377-residue protein sequence, read N- to C-terminus: D-alanine--D-alanine ligase (377 aa).

Positions 141–347 (KRILNQAGIR…YSELIDRLIQ (207 aa)) constitute an ATP-grasp domain. Residue 171-226 (KEELGDLVFVKPAKQGSSVGIHKVDTEEEYETAMKDAFTYDYKVLVEAGIKNPREI) participates in ATP binding. Mg(2+)-binding residues include D301, E314, and N316.

The protein belongs to the D-alanine--D-alanine ligase family. Mg(2+) serves as cofactor. Mn(2+) is required as a cofactor.

It localises to the cytoplasm. The catalysed reaction is 2 D-alanine + ATP = D-alanyl-D-alanine + ADP + phosphate + H(+). The protein operates within cell wall biogenesis; peptidoglycan biosynthesis. Cell wall formation. The polypeptide is D-alanine--D-alanine ligase (Limosilactobacillus fermentum (strain NBRC 3956 / LMG 18251) (Lactobacillus fermentum)).